A 294-amino-acid chain; its full sequence is Cytidine deaminase (294 aa).

CMP/dCMP-type deaminase domains follow at residues 48–168 and 187–294; these read NDDE…FGPK and DNTS…RVTL. 89 to 91 serves as a coordination point for substrate; sequence NME. Zn(2+) is bound at residue histidine 102. Residue glutamate 104 is the Proton donor of the active site. Zn(2+) is bound by residues cysteine 129 and cysteine 132.

Belongs to the cytidine and deoxycytidylate deaminase family. As to quaternary structure, homodimer. Zn(2+) is required as a cofactor.

It carries out the reaction cytidine + H2O + H(+) = uridine + NH4(+). The enzyme catalyses 2'-deoxycytidine + H2O + H(+) = 2'-deoxyuridine + NH4(+). In terms of biological role, this enzyme scavenges exogenous and endogenous cytidine and 2'-deoxycytidine for UMP synthesis. In Proteus mirabilis (strain HI4320), this protein is Cytidine deaminase.